A 425-amino-acid polypeptide reads, in one-letter code: D-arabinitol transporter (425 aa).

The Cytoplasmic portion of the chain corresponds to 1-7; it reads MSINNKQ. A helical membrane pass occupies residues 8–28; sequence WLGLPLNLLWGYIAIAVFMTG. The Extracellular portion of the chain corresponds to 29–51; the sequence is DGFELAFLSHYIKALGFSPAEAS. The chain crosses the membrane as a helical span at residues 52–72; the sequence is FAFTLYGLAAALSAWISGVVA. Residues 73 to 80 lie on the Cytoplasmic side of the membrane; it reads EIITPLKT. Residues 81-101 form a helical membrane-spanning segment; that stretch reads MMIGFVLWCVFHVLFLVFGLG. Residues 102–107 lie on the Extracellular side of the membrane; sequence HANYAL. A helical membrane pass occupies residues 108–128; it reads ILLFYGIRGFAYPLFLYSFIV. Residues 129-141 lie on the Cytoplasmic side of the membrane; it reads AIVHNVKSDNASS. Residues 142 to 162 traverse the membrane as a helical segment; sequence AIGWFWAVYSIGIGVFGSYIP. Over 163–172 the chain is Extracellular; it reads SFTIPHIGEM. The helical transmembrane segment at 173 to 193 threads the bilayer; it reads GTLWLALAFCLTGGVIALVSL. Residues 194–237 lie on the Cytoplasmic side of the membrane; it reads RHIQTPQHMQNLTTREKFSELGRAATLLYTNRNILLSSMVRIIN. Residues 238 to 258 traverse the membrane as a helical segment; sequence TLSLFGFAVIMPMMFVDELGF. Residues 259–263 lie on the Extracellular side of the membrane; that stretch reads STSEW. Residues 264-284 traverse the membrane as a helical segment; it reads LQVWAVFFFTTIFSNVLWGIL. Residues 285-295 are Cytoplasmic-facing; it reads GEKLGWMKVVR. A helical transmembrane segment spans residues 296 to 316; sequence WFGCIGMALSSLAFYYIPQHF. Residues 317–323 are Extracellular-facing; that stretch reads GHSFAMA. Residues 324 to 344 form a helical membrane-spanning segment; the sequence is LIPAIALGIFVAAFVPLAAVF. Residues 345–360 are Cytoplasmic-facing; sequence PALEPKHKGAAISVYN. Residues 361-381 traverse the membrane as a helical segment; that stretch reads LSAGMSNFLAPAIAVVLLPFF. Topologically, residues 382 to 383 are extracellular; it reads ST. The chain crosses the membrane as a helical span at residues 384–404; the sequence is IGVVIAYTALYVVAFFLCAFI. Residues 405–425 lie on the Cytoplasmic side of the membrane; it reads RVEQPGFSHKEATAREQVEFS.

The protein belongs to the major facilitator superfamily. Sugar transporter (TC 2.A.1.1) family. CsbX subfamily.

It localises to the cell membrane. This is D-arabinitol transporter (dalT) from Klebsiella pneumoniae.